The following is a 562-amino-acid chain: Abrin-c (562 aa).

The first 34 residues, 1–34 (MDKTLKLLILCLAWTCSFSALRCAARTYPPVATN), serve as a signal peptide directing secretion. A Pyrrolidone carboxylic acid modification is found at glutamine 35. Residue glutamate 198 is part of the active site. A glycan (N-linked (GlcNAc...) asparagine) is linked at asparagine 234. Cystine bridges form between cysteine 281–cysteine 303, cysteine 320–cysteine 339, and cysteine 363–cysteine 380. The 128-residue stretch at 307-434 (YEPTVRIGGR…YLMRQGWRTG (128 aa)) folds into the Ricin B-type lectin 1 domain. One copy of the 1-alpha repeat lies at 317-359 (DGMCVDVYDDGYHNGNRIIAWKCKDRLEENQLWTLKSDKTIRS). One copy of the 1-beta repeat lies at 360 to 400 (NGKCLTTEGYAPGNYVMIYDCTSAVAEATYWEIWDNGTIIN). 2 N-linked (GlcNAc...) asparagine glycosylation sites follow: asparagine 395 and asparagine 435. The stretch at 403-435 (SALVLSAESSSMGGTLTVQTNEYLMRQGWRTGN) is one 1-gamma repeat. A Ricin B-type lectin 2 domain is found at 437-561 (TSPFVTSISG…GKPNQIWLTL (125 aa)). The 2-alpha repeat unit spans residues 448–483 (SDLCMQAQGSNVWLADCDNNKKEQQWALYTDGSIRS). Cystine bridges form between cysteine 451-cysteine 464 and cysteine 490-cysteine 507. The 2-beta repeat unit spans residues 487–526 (TNNCLTSKDHKQGSPIVLMACSNGWASQRWLFKNDGSIYN). The stretch at 529 to 562 (DDMVMDVKRSDPSLKEIILHPYHGKPNQIWLTLF) is one 2-gamma repeat.

The protein in the N-terminal section; belongs to the ribosome-inactivating protein family. Type 2 RIP subfamily. In terms of assembly, disulfide-linked dimer of A and B chains.

The catalysed reaction is Endohydrolysis of the N-glycosidic bond at one specific adenosine on the 28S rRNA.. Its function is as follows. The A chain is responsible for inhibiting protein synthesis through the catalytic inactivation of 60S ribosomal subunits by removing adenine from position 4,324 of 28S rRNA. Abrin-a is more toxic than ricin. The B chain is a galactose-specific lectin that facilitates the binding of abrin to the cell membrane that precedes endocytosis. The chain is Abrin-c from Abrus precatorius (Indian licorice).